Here is a 486-residue protein sequence, read N- to C-terminus: Elastin-binding protein EbpS (486 aa).

The segment covering 1–40 (MSNNFKDDFEKNRQSIDTNSHQDHTEDVEKDQSELEHQDT) has biased composition (basic and acidic residues). A disordered region spans residues 1 to 314 (MSNNFKDDFE…NHDRDKERKK (314 aa)). The Extracellular portion of the chain corresponds to 2–204 (SNNFKDDFEK…ESKDHHSGKK (203 aa)). Residues 14–34 (QSIDTNSHQDHTEDVEKDQSE) are elastin-binding. A compositionally biased stretch (polar residues) spans 64 to 85 (TNHNKQVHNESQTSEDNVQNEA). Composition is skewed to basic and acidic residues over residues 103–118 (EPSH…EEYY), 126–160 (DKSH…KSEA), and 180–199 (SKDK…SKDH). 2 stretches are compositionally biased toward low complexity: residues 204-225 (KGAA…MGVS) and 233-246 (DAQN…SNNS). Residues 205–225 (GAAIGAGTAGVAGAAGAMGVS) traverse the membrane as a helical segment. Over 226–319 (KAKKHSNDAQ…KERKKGGMAK (94 aa)) the chain is Cytoplasmic. Residues 247–259 (TEDKVSQDKSKDH) show a composition bias toward basic and acidic residues. Residues 278 to 297 (GAASKSASAASKPHASNNAS) show a composition bias toward low complexity. The segment covering 299–314 (NHDEHDNHDRDKERKK) has biased composition (basic and acidic residues). A helical membrane pass occupies residues 320-340 (VLLPLIAAVLIIGALAIFGGM). Over 341–486 (ALNNHNNGTK…IRNGQQIVIP (146 aa)) the chain is Extracellular. Positions 351-440 (ENKIANTNKN…QRQGGGQRHT (90 aa)) are disordered. Residues 361 to 398 (NADESKDKDTSKDASKDKSKSTDSDKSKEDQDKATKDE) show a composition bias toward basic and acidic residues. Low complexity predominate over residues 403 to 431 (QNNANQANNQAQNNQNQQQANQNQQQQQQ). Residues 437–485 (QRHTVNGQENLYRIAIQYYGSGSPENVEKIRRANGLSGNNIRNGQQIVI) enclose the LysM domain.

It is found in the cell membrane. Its function is as follows. Promotes binding of soluble elastin peptides and tropoelastin to S.aureus cells although it is not able to promote bacterial adherence to immobilized elastin and, therefore, is not a microbial surface component recognizing adhesive matrix molecule (MSCRAMM). This Staphylococcus aureus (strain MSSA476) protein is Elastin-binding protein EbpS (ebpS).